Consider the following 602-residue polypeptide: Glutamine--fructose-6-phosphate aminotransferase [isomerizing] (602 aa).

Cys2 serves as the catalytic Nucleophile; for GATase activity. Positions 2 to 222 constitute a Glutamine amidotransferase type-2 domain; sequence CGIFGIIFAE…DGEYGYITAG (221 aa). SIS domains lie at 284-422 and 452-592; these read VANA…ALGH and LAKR…PDKP. Lys597 functions as the For Fru-6P isomerization activity in the catalytic mechanism.

Homodimer.

It localises to the cytoplasm. The enzyme catalyses D-fructose 6-phosphate + L-glutamine = D-glucosamine 6-phosphate + L-glutamate. In terms of biological role, catalyzes the first step in hexosamine metabolism, converting fructose-6P into glucosamine-6P using glutamine as a nitrogen source. This Pyrobaculum aerophilum (strain ATCC 51768 / DSM 7523 / JCM 9630 / CIP 104966 / NBRC 100827 / IM2) protein is Glutamine--fructose-6-phosphate aminotransferase [isomerizing].